We begin with the raw amino-acid sequence, 98 residues long: MENVNTFLEKVLYMEEDRGIADPPLDSLLSRSGSKYGLVIYAAKRARQIDQYYIDLHEGSFYAHVGPLVSVDADDKSLTVAMREIAEDKLDLKSSAAE.

The protein belongs to the RNA polymerase subunit omega family. The RNAP catalytic core consists of 2 alpha, 1 beta, 1 beta' and 1 omega subunit. When a sigma factor is associated with the core the holoenzyme is formed, which can initiate transcription.

The catalysed reaction is RNA(n) + a ribonucleoside 5'-triphosphate = RNA(n+1) + diphosphate. Promotes RNA polymerase assembly. Latches the N- and C-terminal regions of the beta' subunit thereby facilitating its interaction with the beta and alpha subunits. This chain is DNA-directed RNA polymerase subunit omega, found in Tropheryma whipplei (strain Twist) (Whipple's bacillus).